Consider the following 351-residue polypeptide: Quinolinate phosphoribosyltransferase [decarboxylating] 2b, mitochondrial (351 aa).

Substrate contacts are provided by residues arginine 142, 173–175, arginine 197, lysine 207, glutamate 240, aspartate 267, 299–301, and 320–322; these read TRK, SGN, and SGA.

Belongs to the NadC/ModD family. As to expression, expressed in roots and flowers.

It localises to the mitochondrion. It catalyses the reaction nicotinate beta-D-ribonucleotide + CO2 + diphosphate = quinolinate + 5-phospho-alpha-D-ribose 1-diphosphate + 2 H(+). It functions in the pathway alkaloid biosynthesis; nicotine biosynthesis. It participates in cofactor biosynthesis; NAD(+) biosynthesis; nicotinate D-ribonucleotide from quinolinate: step 1/1. Functionally, involved in the biosynthesis of pyridine alkaloid natural products, leading mainly to the production of anabasine, anatabine, nicotine and nornicotine, effective deterrents against herbivores with antiparasitic and pesticide properties (neurotoxins); nornicotine serves as the precursor in the synthesis of the carcinogen compound N'-nitrosonornicotine (NNN). Involved in the catabolism of quinolinic acid (QA). The sequence is that of Quinolinate phosphoribosyltransferase [decarboxylating] 2b, mitochondrial from Nicotiana tabacum (Common tobacco).